The chain runs to 107 residues: Small ribosomal subunit protein uS10 (107 aa).

Belongs to the universal ribosomal protein uS10 family. In terms of assembly, part of the 30S ribosomal subunit.

In terms of biological role, involved in the binding of tRNA to the ribosomes. In Deinococcus deserti (strain DSM 17065 / CIP 109153 / LMG 22923 / VCD115), this protein is Small ribosomal subunit protein uS10.